A 300-amino-acid chain; its full sequence is Cation-efflux pump FieF (300 aa).

The chain crosses the membrane as a helical span at residues 24–44 (LLIKIFAWWYTGSVSILAALV). 2 residues coordinate Zn(2+): Asp45 and Asp49. Helical transmembrane passes span 82–102 (AALA…LTSI) and 114–134 (PGVG…LVTF). Zn(2+)-binding residues include His153 and Asp157. 2 helical membrane passes run 156–176 (SDVM…YGWH) and 178–198 (ADAL…LRMG).

The protein belongs to the cation diffusion facilitator (CDF) transporter (TC 2.A.4) family. FieF subfamily. As to quaternary structure, homodimer.

Its subcellular location is the cell inner membrane. It carries out the reaction Zn(2+)(in) + H(+)(out) = Zn(2+)(out) + H(+)(in). The catalysed reaction is Cd(2+)(in) + H(+)(out) = Cd(2+)(out) + H(+)(in). It catalyses the reaction Fe(2+)(in) + H(+)(out) = Fe(2+)(out) + H(+)(in). Divalent metal cation transporter which exports Zn(2+), Cd(2+) and possibly Fe(2+). May be involved in zinc and iron detoxification by efflux. In Salmonella schwarzengrund (strain CVM19633), this protein is Cation-efflux pump FieF.